Reading from the N-terminus, the 482-residue chain is Isoxanthopterin deaminase (482 aa).

The Zn(2+) site is built by H74 and H76. Q79 contacts substrate. Zn(2+) is bound at residue H246. The substrate site is built by E249 and H283. Zn(2+)-binding residues include H283 and D334.

Belongs to the metallo-dependent hydrolases superfamily. ATZ/TRZ family. The cofactor is Zn(2+).

It carries out the reaction a 2-amino-4-hydroxypteridine + H2O + H(+) = a 2,4-dihydroxypteridine + NH4(+). The protein is Isoxanthopterin deaminase of Unknown prokaryotic organism.